Here is a 379-residue protein sequence, read N- to C-terminus: MSSVTIERIETCLVDLPTIRPHKLSVATMYGQTLMLVKVYCTDGAVGIGEGTTIAGMAYGPESPEAMKLAIDAYFAPALVGKDATRIQTLMAHLGKLVKINHFAKSALETALLDAHGKRLGVAVSELLGGRRRERLPVAWTLASGDTSRDIAEAEQMIEVRRHNVFKLKIGAKELKTDIKHVAEIKRVVGEHAAVRVDVNMAWSETQAAWAIPALADAGCELVEQPVASAAALARLMRRFPVALMADEILQGPDNAFEIARVNGADVFAIKIEQSGGLFAAQRVAAIADAAGIELYGGTMLEGAFSTVASAHLFASFANLQWGTELFGPLLITEEILTKPLDYSDYQLTVPDGPGLGIELDEEKVRRFTRDGLIKVTKA.

Residue Lys169 is part of the active site. Mn(2+) contacts are provided by Asp198, Glu224, and Asp247.

Belongs to the mandelate racemase/muconate lactonizing enzyme family. Homooctamer. The cofactor is Mn(2+).

It catalyses the reaction (S)-muconolactone = cis,cis-muconate + H(+). The protein operates within aromatic compound metabolism; beta-ketoadipate pathway; 5-oxo-4,5-dihydro-2-furylacetate from catechol: step 2/3. In terms of biological role, catalyzes a syn cycloisomerization. The chain is Muconate cycloisomerase 1-1 (catB1) from Acinetobacter lwoffii.